A 212-amino-acid polypeptide reads, in one-letter code: Sentrin-specific protease 8 (212 aa).

N-acetylmethionine is present on Met-1. A protease region spans residues 11 to 174; the sequence is SLLRQSDVSL…MYVICNTEAL (164 aa). Active-site residues include His-102 and Asp-119. Residue Cys-163 is the Nucleophile of the active site.

The protein belongs to the peptidase C48 family. As to expression, broadly expressed, with highest levels in kidney and pancreas.

Functionally, protease that catalyzes two essential functions in the NEDD8 pathway: processing of full-length NEDD8 to its mature form and deconjugation of NEDD8 from targeted proteins such as cullins or p53. The polypeptide is Sentrin-specific protease 8 (SENP8) (Homo sapiens (Human)).